We begin with the raw amino-acid sequence, 1058 residues long: Carbamoyl phosphate synthase pyrimidine-specific large chain (1058 aa).

The tract at residues 1–401 (MPKRTDIHKI…ATLKAVRSLE (401 aa)) is carboxyphosphate synthetic domain. 12 residues coordinate ATP: Arg129, Arg169, Gly175, Gly176, Gln208, Ile210, Glu215, Gly241, Ile242, His243, Gln284, and Glu298. Residues 133–327 (KALMEELGEP…IAKMAAKIAV (195 aa)) enclose the ATP-grasp 1 domain. Residues Gln284, Glu298, and Asn300 each contribute to the Mg(2+) site. 3 residues coordinate Mn(2+): Gln284, Glu298, and Asn300. Residues 402-546 (IGVHHVEEPA…YGTYEFENES (145 aa)) are oligomerization domain. A carbamoyl phosphate synthetic domain region spans residues 547–929 (IVTKRPSVLV…ALYKAFEAAK (383 aa)). The 191-residue stretch at 671 to 861 (DKVIKALAIP…MAQVATRAIL (191 aa)) folds into the ATP-grasp 2 domain. Residues Arg707, Ser746, Leu748, Glu752, Gly777, Val778, His779, Ser780, Gln820, and Glu832 each coordinate ATP. Gln820, Glu832, and Asn834 together coordinate Mg(2+). Gln820, Glu832, and Asn834 together coordinate Mn(2+). The MGS-like domain occupies 930-1058 (LHVPSHGNVL…ESQSFVTQAL (129 aa)). The allosteric domain stretch occupies residues 930–1058 (LHVPSHGNVL…ESQSFVTQAL (129 aa)).

It belongs to the CarB family. In terms of assembly, composed of two chains; the small (or glutamine) chain promotes the hydrolysis of glutamine to ammonia, which is used by the large (or ammonia) chain to synthesize carbamoyl phosphate. Tetramer of heterodimers (alpha,beta)4. Requires Mg(2+) as cofactor. Mn(2+) serves as cofactor.

The enzyme catalyses hydrogencarbonate + L-glutamine + 2 ATP + H2O = carbamoyl phosphate + L-glutamate + 2 ADP + phosphate + 2 H(+). It carries out the reaction hydrogencarbonate + NH4(+) + 2 ATP = carbamoyl phosphate + 2 ADP + phosphate + 2 H(+). Its pathway is amino-acid biosynthesis; L-arginine biosynthesis; carbamoyl phosphate from bicarbonate: step 1/1. It participates in pyrimidine metabolism; UMP biosynthesis via de novo pathway; (S)-dihydroorotate from bicarbonate: step 1/3. In terms of biological role, small subunit of the glutamine-dependent carbamoyl phosphate synthetase (CPSase). CPSase catalyzes the formation of carbamoyl phosphate from the ammonia moiety of glutamine, carbonate, and phosphate donated by ATP, constituting the first step of the biosynthetic pathway leading to pyrimidine nucleotides. The large subunit (synthetase) binds the substrates ammonia (free or transferred from glutamine from the small subunit), hydrogencarbonate and ATP and carries out an ATP-coupled ligase reaction, activating hydrogencarbonate by forming carboxy phosphate which reacts with ammonia to form carbamoyl phosphate. The chain is Carbamoyl phosphate synthase pyrimidine-specific large chain (pyrAB) from Lactiplantibacillus plantarum (strain ATCC BAA-793 / NCIMB 8826 / WCFS1) (Lactobacillus plantarum).